The chain runs to 339 residues: F-box protein At3g22700 (339 aa).

One can recognise an F-box domain in the interval 1–49 (MMSNLPLDLVEEILSRVPATSLKRLRSTCRQWNALLKDRRFTEKHFRKA).

The polypeptide is F-box protein At3g22700 (Arabidopsis thaliana (Mouse-ear cress)).